The following is a 366-amino-acid chain: Beta sliding clamp (366 aa).

The protein belongs to the beta sliding clamp family. Forms a ring-shaped head-to-tail homodimer around DNA which binds and tethers DNA polymerases and other proteins to the DNA. The DNA replisome complex has a single clamp-loading complex (3 tau and 1 each of delta, delta', psi and chi subunits) which binds 3 Pol III cores (1 core on the leading strand and 2 on the lagging strand) each with a beta sliding clamp dimer. Additional proteins in the replisome are other copies of gamma, psi and chi, Ssb, DNA helicase and RNA primase.

The protein localises to the cytoplasm. Confers DNA tethering and processivity to DNA polymerases and other proteins. Acts as a clamp, forming a ring around DNA (a reaction catalyzed by the clamp-loading complex) which diffuses in an ATP-independent manner freely and bidirectionally along dsDNA. Initially characterized for its ability to contact the catalytic subunit of DNA polymerase III (Pol III), a complex, multichain enzyme responsible for most of the replicative synthesis in bacteria; Pol III exhibits 3'-5' exonuclease proofreading activity. The beta chain is required for initiation of replication as well as for processivity of DNA replication. The protein is Beta sliding clamp (dnaN) of Buchnera aphidicola subsp. Acyrthosiphon pisum (strain APS) (Acyrthosiphon pisum symbiotic bacterium).